Here is a 306-residue protein sequence, read N- to C-terminus: uncharacterized protein (306 aa).

10 helical membrane-spanning segments follow: residues 6-26, 35-55, 69-89, 98-118, 122-142, 154-174, 186-206, 211-231, 247-267, and 281-301; these read LLGF…PIAL, AQTI…ALLA, YAWI…LFSS, VAQI…VLIF, LGLH…LFFN, YSTG…YGMA, QILL…ADFS, LTPL…IGYG, VVIT…HYFS, and YIGA…HKLL. EamA domains lie at 17 to 142 and 166 to 296; these read MAWG…LFFN and LIWV…LSAI.

This sequence belongs to the EamA transporter family.

The protein localises to the cell membrane. This is an uncharacterized protein from Haemophilus influenzae (strain ATCC 51907 / DSM 11121 / KW20 / Rd).